Here is a 237-residue protein sequence, read N- to C-terminus: 2-C-methyl-D-erythritol 4-phosphate cytidylyltransferase (237 aa).

The protein belongs to the IspD/TarI cytidylyltransferase family. IspD subfamily.

The catalysed reaction is 2-C-methyl-D-erythritol 4-phosphate + CTP + H(+) = 4-CDP-2-C-methyl-D-erythritol + diphosphate. It participates in isoprenoid biosynthesis; isopentenyl diphosphate biosynthesis via DXP pathway; isopentenyl diphosphate from 1-deoxy-D-xylulose 5-phosphate: step 2/6. Catalyzes the formation of 4-diphosphocytidyl-2-C-methyl-D-erythritol from CTP and 2-C-methyl-D-erythritol 4-phosphate (MEP). The polypeptide is 2-C-methyl-D-erythritol 4-phosphate cytidylyltransferase (Vibrio vulnificus (strain CMCP6)).